The primary structure comprises 328 residues: Interleukin-12 subunit beta (328 aa).

The first 22 residues, 1 to 22 (MCHQQLVISWFSLVFLASPLMA), serve as a signal peptide directing secretion. The 78-residue stretch at 29–106 (DVYVVELDWY…LSHSLLLLHK (78 aa)) folds into the Ig-like C2-type domain. The cysteines at positions 50 and 90 are disulfide-linked. N-linked (GlcNAc...) asparagine glycans are attached at residues N125, N135, and N222. One can recognise a Fibronectin type-III domain in the interval 237–328 (PPKNLQLKPL…WSEWASVPCS (92 aa)).

The protein belongs to the IL-12B family. In terms of assembly, heterodimer with IL12A; disulfide-linked. The heterodimer is known as interleukin IL-12. Heterodimer with IL23A; disulfide-linked. The heterodimer is known as interleukin IL-23. Also secreted as a monomer. Interacts with NBR1; this interaction promotes IL-12 secretion.

The protein localises to the secreted. In terms of biological role, cytokine that can act as a growth factor for activated T and NK cells, enhance the lytic activity of NK/lymphokine-activated killer cells, and stimulate the production of IFN-gamma by resting PBMC. Its function is as follows. Associates with IL23A to form the IL-23 interleukin, a heterodimeric cytokine which functions in innate and adaptive immunity. IL-23 may constitute with IL-17 an acute response to infection in peripheral tissues. IL-23 binds to a heterodimeric receptor complex composed of IL12RB1 and IL23R, activates the Jak-Stat signaling cascade, stimulates memory rather than naive T-cells and promotes production of pro-inflammatory cytokines. IL-23 induces autoimmune inflammation and thus may be responsible for autoimmune inflammatory diseases and may be important for tumorigenesis. The sequence is that of Interleukin-12 subunit beta (IL12B) from Macaca mulatta (Rhesus macaque).